A 328-amino-acid polypeptide reads, in one-letter code: D-cysteine desulfhydrase (328 aa).

Residue Lys-51 is modified to N6-(pyridoxal phosphate)lysine.

The protein belongs to the ACC deaminase/D-cysteine desulfhydrase family. In terms of assembly, homodimer. The cofactor is pyridoxal 5'-phosphate.

The enzyme catalyses D-cysteine + H2O = hydrogen sulfide + pyruvate + NH4(+) + H(+). Functionally, catalyzes the alpha,beta-elimination reaction of D-cysteine and of several D-cysteine derivatives. It could be a defense mechanism against D-cysteine. The protein is D-cysteine desulfhydrase of Salmonella agona (strain SL483).